A 295-amino-acid chain; its full sequence is Large ribosomal subunit protein uL2 (295 aa).

Residues 243–295 (WRPHTRGTAMNPVDHPHGGGEGRTRGKHPESPWDGRRRDTRREGVRSTPISLS) are disordered. Residues 256–287 (DHPHGGGEGRTRGKHPESPWDGRRRDTRREGV) show a composition bias toward basic and acidic residues.

Belongs to the universal ribosomal protein uL2 family. In terms of assembly, part of the 50S ribosomal subunit. Forms a bridge to the 30S subunit in the 70S ribosome.

Its function is as follows. One of the primary rRNA binding proteins. Required for association of the 30S and 50S subunits to form the 70S ribosome, for tRNA binding and peptide bond formation. It has been suggested to have peptidyltransferase activity; this is somewhat controversial. Makes several contacts with the 16S rRNA in the 70S ribosome. This chain is Large ribosomal subunit protein uL2, found in Aquifex pyrophilus.